The following is a 448-amino-acid chain: Glutamate--tRNA ligase 1 (448 aa).

The short motif at Pro9–Asn19 is the 'HIGH' region element. The short motif at Lys240–Arg244 is the 'KMSKS' region element. An ATP-binding site is contributed by Lys243.

The protein belongs to the class-I aminoacyl-tRNA synthetase family. Glutamate--tRNA ligase type 1 subfamily. As to quaternary structure, monomer.

Its subcellular location is the cytoplasm. It carries out the reaction tRNA(Glu) + L-glutamate + ATP = L-glutamyl-tRNA(Glu) + AMP + diphosphate. Its function is as follows. Catalyzes the attachment of glutamate to tRNA(Glu) in a two-step reaction: glutamate is first activated by ATP to form Glu-AMP and then transferred to the acceptor end of tRNA(Glu). This is Glutamate--tRNA ligase 1 from Orientia tsutsugamushi (strain Ikeda) (Rickettsia tsutsugamushi).